A 356-amino-acid polypeptide reads, in one-letter code: 3,4-dihydroxy-2-butanone 4-phosphate synthase (356 aa).

Residues 1–211 (MNAILSDQKT…ISDIVEYRMM (211 aa)) are DHBP synthase. D-ribulose 5-phosphate-binding positions include 38–39 (RE), aspartate 43, 150–154 (RIGHT), and glutamate 174. Glutamate 39 is a binding site for Mg(2+). Histidine 153 provides a ligand contact to Mg(2+). Residues 212 to 356 (NESLIRVIAE…KSTNVNETVA (145 aa)) are GTP cyclohydrolase II-like.

This sequence in the N-terminal section; belongs to the DHBP synthase family. In the C-terminal section; belongs to the GTP cyclohydrolase II family. The cofactor is Mg(2+). Mn(2+) is required as a cofactor.

It catalyses the reaction D-ribulose 5-phosphate = (2S)-2-hydroxy-3-oxobutyl phosphate + formate + H(+). Its pathway is cofactor biosynthesis; riboflavin biosynthesis; 2-hydroxy-3-oxobutyl phosphate from D-ribulose 5-phosphate: step 1/1. In terms of biological role, catalyzes the conversion of D-ribulose 5-phosphate to formate and 3,4-dihydroxy-2-butanone 4-phosphate. The chain is 3,4-dihydroxy-2-butanone 4-phosphate synthase (ribB) from Sulfurospirillum multivorans (Dehalospirillum multivorans).